The primary structure comprises 320 residues: V-set and transmembrane domain-containing protein 4 (320 aa).

The signal sequence occupies residues 1 to 23; that stretch reads MRLLALAAAALLARAPAPEVCAA. In terms of domain architecture, Ig-like spans 24 to 155; it reads LNVTVSPGPV…SSATEMRVIS (132 aa). At 24 to 180 the chain is on the extracellular side; that stretch reads LNVTVSPGPV…WAFFEDLYVY (157 aa). N-linked (GlcNAc...) asparagine glycans are attached at residues Asn25, Asn41, Asn89, and Asn144. A disulfide bridge links Cys46 with Cys127. A helical membrane pass occupies residues 181 to 201; that stretch reads AVLVCCVGILSILLFMLVIVW. At 202 to 320 the chain is on the cytoplasmic side; that stretch reads QSVFNKRKSR…AQILFEENKL (119 aa).

Post-translationally, proteolytically cleaved to generate a bioactive peptide.

It is found in the secreted. The protein resides in the cell membrane. Functionally, peptide Lv enhances L-type voltage-gated calcium channel (L-VGCC) currents in retinal photoreceptors. The sequence is that of V-set and transmembrane domain-containing protein 4 (VSTM4) from Homo sapiens (Human).